Consider the following 137-residue polypeptide: Large ribosomal subunit protein bL17 (137 aa).

It belongs to the bacterial ribosomal protein bL17 family. Part of the 50S ribosomal subunit. Contacts protein L32.

The sequence is that of Large ribosomal subunit protein bL17 from Caulobacter sp. (strain K31).